Reading from the N-terminus, the 259-residue chain is 14-3-3-like protein GF14 omega (259 aa).

3 positions are modified to phosphoserine: Ser-67, Ser-109, and Ser-190. A Phosphothreonine modification is found at Thr-211.

It belongs to the 14-3-3 family. Interacts with CINV1.

The protein resides in the nucleus. Its subcellular location is the cytoplasm. Functionally, is associated with a DNA binding complex that binds to the G box, a well-characterized cis-acting DNA regulatory element found in plant genes. The protein is 14-3-3-like protein GF14 omega (GRF2) of Arabidopsis thaliana (Mouse-ear cress).